The sequence spans 571 residues: Ubiquitin-like-specific protease 1C (571 aa).

A disordered region spans residues 221–260 (SESKDPKGDRRPNEAYGKGKPNESSPYLLVDDDDGDDDKV). A compositionally biased stretch (basic and acidic residues) spans 222-233 (ESKDPKGDRRPN). Residues histidine 426, aspartate 449, and cysteine 512 contribute to the active site.

It belongs to the peptidase C48 family.

The protein resides in the nucleus. Its subcellular location is the nucleoplasm. Its function is as follows. Protease that catalyzes two essential functions in the SUMO pathway: processing of full-length SUMOs to their mature forms and deconjugation of SUMO from targeted proteins. Cleaves precursors of SUM1 and SUM2, but not of SUM3 or SUM5. Able to release SUM1 and SUM2 from conjugates, but unable to cleave SUM3. Protease activity mainly directed at deconjugating SUM1 and SUM2 from their target proteins. Regulates salt stress responses and flowering time. Redundant with ULP1D. This is Ubiquitin-like-specific protease 1C (ULP1C) from Arabidopsis thaliana (Mouse-ear cress).